Reading from the N-terminus, the 117-residue chain is Large ribosomal subunit protein bL19 (117 aa).

It belongs to the bacterial ribosomal protein bL19 family.

Its function is as follows. This protein is located at the 30S-50S ribosomal subunit interface and may play a role in the structure and function of the aminoacyl-tRNA binding site. The protein is Large ribosomal subunit protein bL19 of Shewanella halifaxensis (strain HAW-EB4).